A 294-amino-acid polypeptide reads, in one-letter code: Cytidine deaminase (294 aa).

2 CMP/dCMP-type deaminase domains span residues D48–K168 and L186–A294. N89 to E91 is a binding site for substrate. Zn(2+) is bound at residue H102. Catalysis depends on E104, which acts as the Proton donor. Zn(2+) contacts are provided by C129 and C132.

Belongs to the cytidine and deoxycytidylate deaminase family. In terms of assembly, homodimer. Zn(2+) serves as cofactor.

It carries out the reaction cytidine + H2O + H(+) = uridine + NH4(+). The enzyme catalyses 2'-deoxycytidine + H2O + H(+) = 2'-deoxyuridine + NH4(+). Its function is as follows. This enzyme scavenges exogenous and endogenous cytidine and 2'-deoxycytidine for UMP synthesis. This chain is Cytidine deaminase, found in Escherichia coli O157:H7.